The following is a 310-amino-acid chain: Eukaryotic translation initiation factor 3 subunit G (310 aa).

Disordered stretches follow at residues 1 to 32 (MPTE…PVTK) and 179 to 229 (TGDK…DDNA). Residues 187 to 196 (GAEPEPAQAP) show a composition bias toward low complexity. Residues 211 to 229 (GGSRRGESMQPNRRADDNA) show a composition bias toward basic and acidic residues. The region spanning 229–307 (ATIRVTNLSE…LILNVEWAKP (79 aa)) is the RRM domain.

The protein belongs to the eIF-3 subunit G family. Component of the eukaryotic translation initiation factor 3 (eIF-3) complex, which is composed of 13 subunits: eif3a, eif3b, eif3c, eif3d, eif3e, eif3f, eif3g, eif3h, eif3i, eif3j, eif3k, eif3l and eif3m.

The protein localises to the cytoplasm. Functionally, RNA-binding component of the eukaryotic translation initiation factor 3 (eIF-3) complex, which is involved in protein synthesis of a specialized repertoire of mRNAs and, together with other initiation factors, stimulates binding of mRNA and methionyl-tRNAi to the 40S ribosome. The eIF-3 complex specifically targets and initiates translation of a subset of mRNAs involved in cell proliferation. This subunit can bind 18S rRNA. In Xenopus tropicalis (Western clawed frog), this protein is Eukaryotic translation initiation factor 3 subunit G (eif3g).